We begin with the raw amino-acid sequence, 451 residues long: UPF0210 protein lin0538 (451 aa).

The protein belongs to the UPF0210 family. Homodimer.

This Listeria innocua serovar 6a (strain ATCC BAA-680 / CLIP 11262) protein is UPF0210 protein lin0538.